The primary structure comprises 150 residues: Testis-expressed protein 22 (150 aa).

Positions 1–23 (MDSRKLSPRGKKLESHLSQEHRR) are enriched in basic and acidic residues. A disordered region spans residues 1 to 26 (MDSRKLSPRGKKLESHLSQEHRRPPL).

Its subcellular location is the cytoplasm. The protein localises to the cytoplasmic vesicle. It localises to the secretory vesicle. The protein resides in the acrosome. This chain is Testis-expressed protein 22 (TEX22), found in Homo sapiens (Human).